The primary structure comprises 400 residues: Nicotinate phosphoribosyltransferase (400 aa).

H220 carries the post-translational modification Phosphohistidine; by autocatalysis.

Belongs to the NAPRTase family. Post-translationally, transiently phosphorylated on a His residue during the reaction cycle. Phosphorylation strongly increases the affinity for substrates and increases the rate of nicotinate D-ribonucleotide production. Dephosphorylation regenerates the low-affinity form of the enzyme, leading to product release.

It catalyses the reaction nicotinate + 5-phospho-alpha-D-ribose 1-diphosphate + ATP + H2O = nicotinate beta-D-ribonucleotide + ADP + phosphate + diphosphate. It participates in cofactor biosynthesis; NAD(+) biosynthesis; nicotinate D-ribonucleotide from nicotinate: step 1/1. Functionally, catalyzes the synthesis of beta-nicotinate D-ribonucleotide from nicotinate and 5-phospho-D-ribose 1-phosphate at the expense of ATP. This chain is Nicotinate phosphoribosyltransferase, found in Citrobacter koseri (strain ATCC BAA-895 / CDC 4225-83 / SGSC4696).